Consider the following 308-residue polypeptide: 4-hydroxyproline 2-epimerase (308 aa).

C88 serves as the catalytic Proton acceptor. Substrate-binding positions include 89–90 (GH), H208, and D232. C236 (proton donor) is an active-site residue. Substrate is bound at residue 237 to 238 (GT).

It belongs to the proline racemase family.

It carries out the reaction trans-4-hydroxy-L-proline = cis-4-hydroxy-D-proline. In terms of biological role, catalyzes the epimerization of trans-4-hydroxy-L-proline (t4LHyp) to cis-4-hydroxy-D-proline (c4DHyp). Is likely involved in a degradation pathway that converts t4LHyp to alpha-ketoglutarate. Can also catalyze the epimerization of trans-3-hydroxy-L-proline (t3LHyp) to cis-3-hydroxy-D-proline (c3DHyp), albeit with 19-fold lower efficiency. Displays no proline racemase activity. This Chromobacterium violaceum (strain ATCC 12472 / DSM 30191 / JCM 1249 / CCUG 213 / NBRC 12614 / NCIMB 9131 / NCTC 9757 / MK) protein is 4-hydroxyproline 2-epimerase.